The primary structure comprises 180 residues: ATP synthase subunit delta 2 (180 aa).

This sequence belongs to the ATPase delta chain family. As to quaternary structure, F-type ATPases have 2 components, F(1) - the catalytic core - and F(0) - the membrane proton channel. F(1) has five subunits: alpha(3), beta(3), gamma(1), delta(1), epsilon(1). F(0) has three main subunits: a(1), b(2) and c(10-14). The alpha and beta chains form an alternating ring which encloses part of the gamma chain. F(1) is attached to F(0) by a central stalk formed by the gamma and epsilon chains, while a peripheral stalk is formed by the delta and b chains.

It is found in the cell inner membrane. F(1)F(0) ATP synthase produces ATP from ADP in the presence of a proton or sodium gradient. F-type ATPases consist of two structural domains, F(1) containing the extramembraneous catalytic core and F(0) containing the membrane proton channel, linked together by a central stalk and a peripheral stalk. During catalysis, ATP synthesis in the catalytic domain of F(1) is coupled via a rotary mechanism of the central stalk subunits to proton translocation. Its function is as follows. This protein is part of the stalk that links CF(0) to CF(1). It either transmits conformational changes from CF(0) to CF(1) or is implicated in proton conduction. The polypeptide is ATP synthase subunit delta 2 (Vibrio campbellii (strain ATCC BAA-1116)).